Consider the following 341-residue polypeptide: Dihydroorotate dehydrogenase (quinone) (341 aa).

Residues 61 to 65 (AGLDK) and T85 contribute to the FMN site. K65 contributes to the substrate binding site. 110 to 114 (NRMGF) is a substrate binding site. The FMN site is built by N138 and N171. N171 serves as a coordination point for substrate. S174 (nucleophile) is an active-site residue. Substrate is bound at residue N176. FMN contacts are provided by K216 and T244. Position 245-246 (245-246 (NT)) interacts with substrate. Residues G267, G296, and 317 to 318 (YS) contribute to the FMN site.

Belongs to the dihydroorotate dehydrogenase family. Type 2 subfamily. Monomer. The cofactor is FMN.

Its subcellular location is the cell membrane. It carries out the reaction (S)-dihydroorotate + a quinone = orotate + a quinol. Its pathway is pyrimidine metabolism; UMP biosynthesis via de novo pathway; orotate from (S)-dihydroorotate (quinone route): step 1/1. Its function is as follows. Catalyzes the conversion of dihydroorotate to orotate with quinone as electron acceptor. In Pseudomonas putida (strain W619), this protein is Dihydroorotate dehydrogenase (quinone).